The chain runs to 209 residues: Probable GTP-binding protein EngB (209 aa).

One can recognise an EngB-type G domain in the interval 22-198 (TPLEIAFVGR…NRTVGSWFDA (177 aa)). Mg(2+) contacts are provided by Ser-37 and Thr-59.

This sequence belongs to the TRAFAC class TrmE-Era-EngA-EngB-Septin-like GTPase superfamily. EngB GTPase family. The cofactor is Mg(2+).

Necessary for normal cell division and for the maintenance of normal septation. In Neisseria gonorrhoeae, this protein is Probable GTP-binding protein EngB.